The following is a 287-amino-acid chain: Probable aquaporin PIP1-4 (287 aa).

Methionine 1 carries the N-acetylmethionine modification. Residues 1 to 36 (MEGKEEDVRVGANKFPERQPIGTSAQSTDKDYKEPP) are disordered. The Cytoplasmic segment spans residues 1-55 (MEGKEEDVRVGANKFPERQPIGTSAQSTDKDYKEPPPAPLFEPGELSSWSFYRAG). The helical transmembrane segment at 56–76 (IAEFIATFLFLYITVLTVMGV) threads the bilayer. At 77 to 92 (KRAPNMCASVGIQGIA) the chain is on the extracellular side. A helical membrane pass occupies residues 93–113 (WAFGGMIFALVYCTAGISGGH). Residues 114 to 133 (INPAVTFGLFLARKLSLTRA) are Cytoplasmic-facing. The NPA 1 signature appears at 115–117 (NPA). Residues 134-154 (VFYMIMQCLGAICGAGVVKGF) form a helical membrane-spanning segment. Topologically, residues 155-175 (QPTPYQTLGGGANTVAHGYTK) are extracellular. The chain crosses the membrane as a helical span at residues 176–196 (GSGLGAEIIGTFVLVYTVFSA). Residues 197–209 (TDAKRSARDSHVP) are Cytoplasmic-facing. The helical transmembrane segment at 210 to 230 (ILAPLPIGFAVFLVHLATIPI) threads the bilayer. The Extracellular segment spans residues 231–257 (TGTGINPARSLGAAIIYNKDHSWDDHW). The short motif at 236-238 (NPA) is the NPA 2 element. Residues 258 to 278 (IFWVGPFIGAALAALYHQIVI) traverse the membrane as a helical segment. Residues 279 to 287 (RAIPFKSKS) are Cytoplasmic-facing. Serine 285 is subject to Phosphoserine.

It belongs to the MIP/aquaporin (TC 1.A.8) family. PIP (TC 1.A.8.11) subfamily. In terms of tissue distribution, predominantly expressed in roots and green siliques. Also expressed above ground and in flower buds.

The protein localises to the cell membrane. Its function is as follows. Aquaporins facilitate the transport of water and small neutral solutes across cell membranes. In Arabidopsis thaliana (Mouse-ear cress), this protein is Probable aquaporin PIP1-4 (PIP1.4).